A 400-amino-acid polypeptide reads, in one-letter code: Formate-dependent phosphoribosylglycinamide formyltransferase (400 aa).

N(1)-(5-phospho-beta-D-ribosyl)glycinamide is bound by residues 22-23 (EL) and E82. Residues R115, K157, 162–167 (SSGKGQ), 197–200 (EGFI), and E205 each bind ATP. The 196-residue stretch at 120-315 (RLAAETLGVP…EFELHARAIL (196 aa)) folds into the ATP-grasp domain. Residues E274 and E286 each coordinate Mg(2+). Residues D293, K362, and 369 to 370 (RR) each bind N(1)-(5-phospho-beta-D-ribosyl)glycinamide.

The protein belongs to the PurK/PurT family. In terms of assembly, homodimer.

It catalyses the reaction N(1)-(5-phospho-beta-D-ribosyl)glycinamide + formate + ATP = N(2)-formyl-N(1)-(5-phospho-beta-D-ribosyl)glycinamide + ADP + phosphate + H(+). It participates in purine metabolism; IMP biosynthesis via de novo pathway; N(2)-formyl-N(1)-(5-phospho-D-ribosyl)glycinamide from N(1)-(5-phospho-D-ribosyl)glycinamide (formate route): step 1/1. In terms of biological role, involved in the de novo purine biosynthesis. Catalyzes the transfer of formate to 5-phospho-ribosyl-glycinamide (GAR), producing 5-phospho-ribosyl-N-formylglycinamide (FGAR). Formate is provided by PurU via hydrolysis of 10-formyl-tetrahydrofolate. This chain is Formate-dependent phosphoribosylglycinamide formyltransferase, found in Variovorax paradoxus (strain S110).